The following is a 263-amino-acid chain: Putative steroid dehydrogenase 4 (263 aa).

Tyr154 serves as the catalytic Proton acceptor.

The protein belongs to the short-chain dehydrogenases/reductases (SDR) family. 17-beta-HSD 3 subfamily.

The sequence is that of Putative steroid dehydrogenase 4 (stdh-4) from Caenorhabditis elegans.